Reading from the N-terminus, the 732-residue chain is Polyribonucleotide nucleotidyltransferase (732 aa).

Asp503 and Asp509 together coordinate Mg(2+). The KH domain maps to Pro570 to Ile629. The S1 motif domain occupies Gly639–Lys713. The segment at Leu710 to Asn732 is disordered. The segment covering Val715–Asn732 has biased composition (basic and acidic residues).

This sequence belongs to the polyribonucleotide nucleotidyltransferase family. It depends on Mg(2+) as a cofactor.

It localises to the cytoplasm. The catalysed reaction is RNA(n+1) + phosphate = RNA(n) + a ribonucleoside 5'-diphosphate. Involved in mRNA degradation. Catalyzes the phosphorolysis of single-stranded polyribonucleotides processively in the 3'- to 5'-direction. The chain is Polyribonucleotide nucleotidyltransferase from Chlorobium phaeobacteroides (strain DSM 266 / SMG 266 / 2430).